We begin with the raw amino-acid sequence, 225 residues long: NAD(P)H-quinone oxidoreductase subunit K, chloroplastic (225 aa).

4 residues coordinate [4Fe-4S] cluster: Cys-43, Cys-44, Cys-108, and Cys-139.

Belongs to the complex I 20 kDa subunit family. As to quaternary structure, NDH is composed of at least 16 different subunits, 5 of which are encoded in the nucleus. The cofactor is [4Fe-4S] cluster.

It is found in the plastid. It localises to the chloroplast thylakoid membrane. The catalysed reaction is a plastoquinone + NADH + (n+1) H(+)(in) = a plastoquinol + NAD(+) + n H(+)(out). It carries out the reaction a plastoquinone + NADPH + (n+1) H(+)(in) = a plastoquinol + NADP(+) + n H(+)(out). Functionally, NDH shuttles electrons from NAD(P)H:plastoquinone, via FMN and iron-sulfur (Fe-S) centers, to quinones in the photosynthetic chain and possibly in a chloroplast respiratory chain. The immediate electron acceptor for the enzyme in this species is believed to be plastoquinone. Couples the redox reaction to proton translocation, and thus conserves the redox energy in a proton gradient. The chain is NAD(P)H-quinone oxidoreductase subunit K, chloroplastic from Oenothera argillicola (Appalachian evening primrose).